The sequence spans 149 residues: D-aminoacyl-tRNA deacylase (149 aa).

A Gly-cisPro motif, important for rejection of L-amino acids motif is present at residues 137-138 (GP).

The protein belongs to the DTD family. Homodimer.

The protein localises to the cytoplasm. The enzyme catalyses glycyl-tRNA(Ala) + H2O = tRNA(Ala) + glycine + H(+). The catalysed reaction is a D-aminoacyl-tRNA + H2O = a tRNA + a D-alpha-amino acid + H(+). An aminoacyl-tRNA editing enzyme that deacylates mischarged D-aminoacyl-tRNAs. Also deacylates mischarged glycyl-tRNA(Ala), protecting cells against glycine mischarging by AlaRS. Acts via tRNA-based rather than protein-based catalysis; rejects L-amino acids rather than detecting D-amino acids in the active site. By recycling D-aminoacyl-tRNA to D-amino acids and free tRNA molecules, this enzyme counteracts the toxicity associated with the formation of D-aminoacyl-tRNA entities in vivo and helps enforce protein L-homochirality. This Clostridium botulinum (strain Loch Maree / Type A3) protein is D-aminoacyl-tRNA deacylase.